The primary structure comprises 335 residues: MPPQKENHRTLNKMKTNLFLFLIFSLLLSLSSAEQCGRQAGGALCPNGLCCSEFGWCGNTEPYCKQPGCQSQCTPGGTPPGPTGDLSGIISSSQFDDMLKHRNDAACPARGFYTYNAFITAAKSFPGFGTTGDTATRKKEVAAFFGQTSHETTGGWATAPDGPYSWGYCFKQEQNPASDYCEPSATWPCASGKRYYGRGPMQLSWNYNYGLCGRAIGVDLLNNPDLVANDAVIAFKAAIWFWMTAQPPKPSCHAVIAGQWQPSDADRAAGRLPGYGVITNIINGGLECGRGQDGRVADRIGFYQRYCNIFGVNPGGNLDCYNQRSFVNGLLEAAI.

Residues 1–33 form the signal peptide; the sequence is MPPQKENHRTLNKMKTNLFLFLIFSLLLSLSSA. The 42-residue stretch at 34 to 75 folds into the Chitin-binding type-1 domain; the sequence is EQCGRQAGGALCPNGLCCSEFGWCGNTEPYCKQPGCQSQCTP. 7 cysteine pairs are disulfide-bonded: C36-C51, C45-C57, C50-C64, C69-C73, C107-C169, C181-C189, and C288-C320. Catalysis depends on E151, which acts as the Proton donor. Positions 329–335 are cleaved as a propeptide — removed in mature form; it reads GLLEAAI. The Vacuolar targeting signal motif lies at 329–335; sequence GLLEAAI.

The protein belongs to the glycosyl hydrolase 19 family. Chitinase class I subfamily. As to expression, high constitutive level in roots with lower levels in leaves and flowering shoots.

It is found in the vacuole. The enzyme catalyses Random endo-hydrolysis of N-acetyl-beta-D-glucosaminide (1-&gt;4)-beta-linkages in chitin and chitodextrins.. Functionally, defense against chitin-containing fungal pathogens. Seems particularly implicated in resistance to jasmonate-inducing pathogens such as A.brassicicola. In vitro antifungal activity against T.reesei, but not against A.solani, F.oxysporum, S.sclerotiorum, G.graminis and P.megasperma. This is Basic endochitinase B (CHI-B) from Arabidopsis thaliana (Mouse-ear cress).